A 77-amino-acid polypeptide reads, in one-letter code: uncharacterized protein (77 aa).

This is an uncharacterized protein from Escherichia coli (strain K12).